The sequence spans 414 residues: Coenzyme A biosynthesis bifunctional protein CoaBC (414 aa).

The tract at residues 1–191 is phosphopantothenoylcysteine decarboxylase; the sequence is MSARKRIVVG…ALPYDMAGVK (191 aa). Residues 192–414 are phosphopantothenate--cysteine ligase; sequence ALVTAGGTRE…IAAFLKSQDG (223 aa). Residues 275–277, Asp281, Lys291, 293–294, 308–311, Phe332, Lys350, and Lys354 contribute to the CTP site; these read MAA, KK, and DDVL.

The protein in the N-terminal section; belongs to the HFCD (homo-oligomeric flavin containing Cys decarboxylase) superfamily. In the C-terminal section; belongs to the PPC synthetase family. Homododecamer. Mg(2+) serves as cofactor. The cofactor is FMN.

It carries out the reaction N-[(R)-4-phosphopantothenoyl]-L-cysteine + H(+) = (R)-4'-phosphopantetheine + CO2. It catalyses the reaction (R)-4'-phosphopantothenate + L-cysteine + CTP = N-[(R)-4-phosphopantothenoyl]-L-cysteine + CMP + diphosphate + H(+). The protein operates within cofactor biosynthesis; coenzyme A biosynthesis; CoA from (R)-pantothenate: step 2/5. It functions in the pathway cofactor biosynthesis; coenzyme A biosynthesis; CoA from (R)-pantothenate: step 3/5. Its activity is regulated as follows. Two related chemical scaffolds that potently inhibit the activity of the CoaB moiety of CoaBC through a cryptic allosteric site that sits in the dimer interface region of the CoaB enzyme were identified. Functionally, catalyzes two sequential steps in the biosynthesis of coenzyme A. In the first step cysteine is conjugated to 4'-phosphopantothenate to form 4-phosphopantothenoylcysteine. In the second step the latter compound is decarboxylated to form 4'-phosphopantotheine. This Mycolicibacterium smegmatis (strain ATCC 700084 / mc(2)155) (Mycobacterium smegmatis) protein is Coenzyme A biosynthesis bifunctional protein CoaBC.